Consider the following 644-residue polypeptide: Fidgetin-like protein 2 (644 aa).

2 disordered regions span residues 1-36 (MHWT…ELPP) and 285-323 (AADG…GGGG). The span at 10–27 (PLNQWPEQHLDVSSTTPS) shows a compositional bias: polar residues. A compositionally biased stretch (low complexity) spans 285–294 (AADGASYPAA). ATP-binding positions include alanine 390 and 430-435 (GCGKAL).

Belongs to the AAA ATPase family. The cofactor is Mg(2+).

It localises to the cytoplasm. It is found in the cell cortex. The enzyme catalyses ATP + H2O = ADP + phosphate + H(+). Microtubule-severing enzyme that negatively regulates cell migration and wound healing. In migrating cells, targets dynamic microtubules (MTs) at the leading edge and severs them, thereby suppressing motility. Microtubule severing releases ARHGEF2 which activates RHOA, which in turn regulates focal ahesion turnover via focal adhesion kinase, as opposed to F-actin polymerization, to suppress cell motility. Negative regulator of axon regeneration that suppresses axonal growth by selectively severing dynamic MTs in the distal axon shaft and growth cone. Contributes to proper cell branching during endothelial and neuronal development. The chain is Fidgetin-like protein 2 (Fignl2) from Mus musculus (Mouse).